The following is a 502-amino-acid chain: MMDLISNLSLGFETALTPVNIVWCFVGVLLGTLVGVLPGIGPTATIAMLLPITFTFSPVTSLIMLSGIYYGAQYGGSTTAILINLPGESSSAVTAIDGYQMARKGRAGQALATAALGSFFAGCVATLLLAIAAPPLASVALKFGAPEYFALIVLGLLVSISLAHGSVLKALGMIVVGLLLGTVGQDIYTGQERFTFGQMELTEGINFVSIAVGVFGVAEIFRNLQDESDREVGVKRVMNLWLSKEDFRRITGPVIRGTILGSILGVLPGGGHVLASFASYSAEKNLSKHPEEFGHGAIEGVAGPESANNAAAQTSFIPLLTLGIPAHPVMALIVGAFILQGITPGPDVINSQPALFWGIIASMWIGNLLLVILNLPLIGLWVKMLTIPYRMLFPAIVVFAAIGCYSINSNPFDVYAIIVAGILGFLLIRMGCEPAPLLLGFVLGPLLEEHLRRAMIISRGDAMVFVTNPIAASLLAVGLACVVIALLPSIRSKRDKVFVEED.

This is an uncharacterized protein from Agrobacterium vitis (Rhizobium vitis).